The chain runs to 232 residues: uncharacterized protein (232 aa).

Residues 10 to 32 (GLTIYLYPVIAWIILVTKIESGL) form a helical membrane-spanning segment.

The protein localises to the membrane. This is an uncharacterized protein from Archaeoglobus fulgidus (strain ATCC 49558 / DSM 4304 / JCM 9628 / NBRC 100126 / VC-16).